The sequence spans 380 residues: 1-deoxy-D-xylulose 5-phosphate reductoisomerase 2 (380 aa).

Residues Ser-10, Gly-11, Ser-12, Ile-13, Gly-36, Lys-37, Asn-38, and Asn-120 each contribute to the NADPH site. Residue Lys-121 coordinates 1-deoxy-D-xylulose 5-phosphate. Residue Glu-122 coordinates NADPH. Asp-146 serves as a coordination point for Mn(2+). Residues Ser-147, Glu-148, Ser-172, and His-195 each contribute to the 1-deoxy-D-xylulose 5-phosphate site. Glu-148 is a binding site for Mn(2+). Gly-201 contacts NADPH. 1-deoxy-D-xylulose 5-phosphate contacts are provided by Ser-208, Asn-213, Lys-214, and Glu-217. Mn(2+) is bound at residue Glu-217.

The protein belongs to the DXR family. Requires Mg(2+) as cofactor. Mn(2+) is required as a cofactor.

The enzyme catalyses 2-C-methyl-D-erythritol 4-phosphate + NADP(+) = 1-deoxy-D-xylulose 5-phosphate + NADPH + H(+). It participates in isoprenoid biosynthesis; isopentenyl diphosphate biosynthesis via DXP pathway; isopentenyl diphosphate from 1-deoxy-D-xylulose 5-phosphate: step 1/6. Functionally, catalyzes the NADPH-dependent rearrangement and reduction of 1-deoxy-D-xylulose-5-phosphate (DXP) to 2-C-methyl-D-erythritol 4-phosphate (MEP). The protein is 1-deoxy-D-xylulose 5-phosphate reductoisomerase 2 of Bacillus anthracis.